Consider the following 76-residue polypeptide: Dermaseptin-H1 (76 aa).

The first 22 residues, 1–22 (MDILKKSLFIVLFLGLVSLSIC), serve as a signal peptide directing secretion. Residues 23 to 45 (EEEKRENEDEEEQEDDEQSEEKR) constitute a propeptide that is removed on maturation. The disordered stretch occupies residues 25-44 (EKRENEDEEEQEDDEQSEEK). Positions 30-41 (EDEEEQEDDEQS) are enriched in acidic residues. Gln73 bears the Glutamine amide mark. The propeptide occupies 75 to 76 (EQ).

As to expression, expressed by the skin glands.

It localises to the secreted. In terms of biological role, has antimicrobial activity. The sequence is that of Dermaseptin-H1 from Pithecopus hypochondrialis (Orange-legged leaf frog).